Reading from the N-terminus, the 695-residue chain is DNA topoisomerase 4 subunit B (695 aa).

A disordered region spans residues 1-53; the sequence is MSSSDKIPSLFGDDDALAPVPAAPFKASVEPRVEPTPRPIPPPPPSKTASAPG. Positions 36–46 are enriched in pro residues; that stretch reads TPRPIPPPPPS. ATP-binding positions include Y55, N95, D122, 164 to 170, and K397; that span reads GLHGVGA. In terms of domain architecture, Toprim spans 477 to 591; sequence AELFIVEGDS…GGHLFLALPP (115 aa). Mg(2+) contacts are provided by E483, D556, and D558.

The protein belongs to the type II topoisomerase family. ParE type 1 subfamily. As to quaternary structure, heterotetramer composed of ParC and ParE. Mg(2+) serves as cofactor. Mn(2+) is required as a cofactor. It depends on Ca(2+) as a cofactor.

It catalyses the reaction ATP-dependent breakage, passage and rejoining of double-stranded DNA.. Functionally, topoisomerase IV is essential for chromosome segregation. It relaxes supercoiled DNA. Performs the decatenation events required during the replication of a circular DNA molecule. The sequence is that of DNA topoisomerase 4 subunit B from Caulobacter vibrioides (strain ATCC 19089 / CIP 103742 / CB 15) (Caulobacter crescentus).